The following is a 201-amino-acid chain: Glycerol-3-phosphate acyltransferase (201 aa).

A run of 5 helical transmembrane segments spans residues 10 to 30 (ALILTGVLGYLLGSIPFGIVI), 59 to 79 (PAALATLLLDSGKGAIAVLIA), 87 to 107 (AAQLAAFTSFLGHLFPVWLGF), 116 to 136 (FLGTLLALAWPVGLACCLTWL), and 161 to 181 (ILLGYGQMAALGAVLAVLIFI).

This sequence belongs to the PlsY family. Probably interacts with PlsX.

It is found in the cell inner membrane. The enzyme catalyses an acyl phosphate + sn-glycerol 3-phosphate = a 1-acyl-sn-glycero-3-phosphate + phosphate. It participates in lipid metabolism; phospholipid metabolism. Catalyzes the transfer of an acyl group from acyl-phosphate (acyl-PO(4)) to glycerol-3-phosphate (G3P) to form lysophosphatidic acid (LPA). This enzyme utilizes acyl-phosphate as fatty acyl donor, but not acyl-CoA or acyl-ACP. The polypeptide is Glycerol-3-phosphate acyltransferase (Cereibacter sphaeroides (strain ATCC 17029 / ATH 2.4.9) (Rhodobacter sphaeroides)).